The chain runs to 138 residues: Putative pre-16S rRNA nuclease (138 aa).

The protein belongs to the YqgF nuclease family.

It localises to the cytoplasm. Could be a nuclease involved in processing of the 5'-end of pre-16S rRNA. In Salmonella dublin (strain CT_02021853), this protein is Putative pre-16S rRNA nuclease.